A 1201-amino-acid chain; its full sequence is uncharacterized protein (1201 aa).

The chain crosses the membrane as a helical span at residues Ile140–Pro160. 2 coiled-coil regions span residues Gln420–Asn459 and Ala536–Met574.

It is found in the cell membrane. This is an uncharacterized protein from Bacillus subtilis (strain 168).